A 453-amino-acid chain; its full sequence is Ribulose bisphosphate carboxylase large chain (453 aa).

The propeptide occupies 1–2 (MS). The residue at position 3 (proline 3) is an N-acetylproline. At lysine 14 the chain carries N6,N6,N6-trimethyllysine. The substrate site is built by asparagine 123 and threonine 173. Lysine 175 serves as the catalytic Proton acceptor. Lysine 177 contacts substrate. 3 residues coordinate Mg(2+): lysine 201, aspartate 203, and glutamate 204. Position 201 is an N6-carboxylysine (lysine 201). The Proton acceptor role is filled by histidine 294. Residues arginine 295, histidine 327, and serine 379 each contribute to the substrate site.

It belongs to the RuBisCO large chain family. Type I subfamily. In terms of assembly, heterohexadecamer of 8 large chains and 8 small chains; disulfide-linked. The disulfide link is formed within the large subunit homodimers. Mg(2+) is required as a cofactor. Post-translationally, the disulfide bond which can form in the large chain dimeric partners within the hexadecamer appears to be associated with oxidative stress and protein turnover.

The protein localises to the plastid. Its subcellular location is the chloroplast. The catalysed reaction is 2 (2R)-3-phosphoglycerate + 2 H(+) = D-ribulose 1,5-bisphosphate + CO2 + H2O. The enzyme catalyses D-ribulose 1,5-bisphosphate + O2 = 2-phosphoglycolate + (2R)-3-phosphoglycerate + 2 H(+). RuBisCO catalyzes two reactions: the carboxylation of D-ribulose 1,5-bisphosphate, the primary event in carbon dioxide fixation, as well as the oxidative fragmentation of the pentose substrate in the photorespiration process. Both reactions occur simultaneously and in competition at the same active site. The chain is Ribulose bisphosphate carboxylase large chain from Galium aparine (Catchweed bedstraw).